The chain runs to 604 residues: NADPH oxidase activator (604 aa).

TPR repeat units follow at residues 36 to 69 (SKIN…DKYL) and 71 to 103 (SSYY…LRGH). 2 disordered regions span residues 180–298 (FKPP…KLPS) and 383–581 (DIIP…PYQV). Low complexity-rich tracts occupy residues 194 to 215 (SATT…SPPS) and 225 to 243 (PSSS…SSSP). Pro residues predominate over residues 244 to 260 (KLPPTPKPSFGSSPPPS). Positions 261–284 (SSSSSSSSSSSSSSSISPLTNKTL) are enriched in low complexity. Positions 309–384 (KITLKVFYKD…EINEINVKDI (76 aa)) constitute a PB1 domain. Low complexity-rich tracts occupy residues 396–424 (PDKT…SSSS), 435–453 (PKTT…TTST), and 467–483 (FGST…SSSS). Residues 502–528 (LLKQQNQTQSINIPPKVPTSSRPKMTQ) are compositionally biased toward polar residues. Residues 529–570 (SHSPPSSSPLSSYSTSFQSVSSPSLSSSYNGSTSSYGGFSSS) show a composition bias toward low complexity. Residues 573–604 (PPTPYPYQVLYTDSNEKYYLNTETNETFWELP) form the WW domain.

Its function is as follows. May function as an activator of NOX1, a superoxide-producing NADPH oxidase. The polypeptide is NADPH oxidase activator (ncfA) (Dictyostelium discoideum (Social amoeba)).